The following is a 159-amino-acid chain: Cyclic pyranopterin monophosphate synthase (159 aa).

Substrate contacts are provided by residues 74–76 (MCH) and 112–113 (ME). The active site involves aspartate 127.

The protein belongs to the MoaC family. Homohexamer; trimer of dimers.

The enzyme catalyses (8S)-3',8-cyclo-7,8-dihydroguanosine 5'-triphosphate = cyclic pyranopterin phosphate + diphosphate. It participates in cofactor biosynthesis; molybdopterin biosynthesis. In terms of biological role, catalyzes the conversion of (8S)-3',8-cyclo-7,8-dihydroguanosine 5'-triphosphate to cyclic pyranopterin monophosphate (cPMP). In Helicobacter hepaticus (strain ATCC 51449 / 3B1), this protein is Cyclic pyranopterin monophosphate synthase.